A 192-amino-acid chain; its full sequence is Protein Syd (192 aa).

It belongs to the Syd family.

The protein localises to the cell inner membrane. Its function is as follows. Interacts with the SecY protein in vivo. May bind preferentially to an uncomplexed state of SecY, thus functioning either as a chelating agent for excess SecY in the cell or as a regulatory factor that negatively controls the translocase function. The sequence is that of Protein Syd from Hahella chejuensis (strain KCTC 2396).